The following is a 188-amino-acid chain: dCTP deaminase (188 aa).

109–114 (KSTYAR) contacts dCTP. Glu-135 (proton donor/acceptor) is an active-site residue. The dCTP site is built by Gln-154, Tyr-168, and Gln-178.

The protein belongs to the dCTP deaminase family. As to quaternary structure, homotrimer.

The enzyme catalyses dCTP + H2O + H(+) = dUTP + NH4(+). Its pathway is pyrimidine metabolism; dUMP biosynthesis; dUMP from dCTP (dUTP route): step 1/2. Catalyzes the deamination of dCTP to dUTP. The sequence is that of dCTP deaminase from Helicobacter pylori (strain P12).